The following is a 212-amino-acid chain: Large ribosomal subunit protein bL25 (212 aa).

The segment at 190–212 (IAEAGDALAEPEVISKGSGEADE) is disordered.

Belongs to the bacterial ribosomal protein bL25 family. CTC subfamily. In terms of assembly, part of the 50S ribosomal subunit; part of the 5S rRNA/L5/L18/L25 subcomplex. Contacts the 5S rRNA. Binds to the 5S rRNA independently of L5 and L18.

Functionally, this is one of the proteins that binds to the 5S RNA in the ribosome where it forms part of the central protuberance. The protein is Large ribosomal subunit protein bL25 of Rhodopirellula baltica (strain DSM 10527 / NCIMB 13988 / SH1).